The following is a 123-amino-acid chain: Guanine nucleotide exchange factor MSS4 (123 aa).

An N-acetylmethionine modification is found at Met1. Positions 9–123 (ELVSAEGRNR…YVALERVSHE (115 aa)) constitute an MSS4 domain. 4 residues coordinate Zn(2+): Cys23, Cys26, Cys94, and Cys97.

The protein belongs to the DSS4/MSS4 family. Interacts with RAB8A. As to expression, ubiquitous.

In terms of biological role, guanine-nucleotide-releasing protein that acts on members of the SEC4/YPT1/RAB subfamily. Stimulates GDP release from both YPT1, RAB3A and RAB10, but is less active on these proteins than on the SEC4 protein. Might play a general role in vesicular transport. The polypeptide is Guanine nucleotide exchange factor MSS4 (RABIF) (Homo sapiens (Human)).